We begin with the raw amino-acid sequence, 412 residues long: NADH-quinone oxidoreductase subunit D (412 aa).

Belongs to the complex I 49 kDa subunit family. As to quaternary structure, NDH-1 is composed of 14 different subunits. Subunits NuoB, C, D, E, F, and G constitute the peripheral sector of the complex.

It is found in the cell inner membrane. The enzyme catalyses a quinone + NADH + 5 H(+)(in) = a quinol + NAD(+) + 4 H(+)(out). NDH-1 shuttles electrons from NADH, via FMN and iron-sulfur (Fe-S) centers, to quinones in the respiratory chain. The immediate electron acceptor for the enzyme in this species is believed to be a menaquinone. Couples the redox reaction to proton translocation (for every two electrons transferred, four hydrogen ions are translocated across the cytoplasmic membrane), and thus conserves the redox energy in a proton gradient. The protein is NADH-quinone oxidoreductase subunit D of Flavobacterium psychrophilum (strain ATCC 49511 / DSM 21280 / CIP 103535 / JIP02/86).